Consider the following 823-residue polypeptide: Protein ROOT HAIR DEFECTIVE 3 homolog 2 (823 aa).

Residues 1–688 (MEVPISGGGG…EAHRRSNNWL (688 aa)) lie on the Cytoplasmic side of the membrane. Residues 45-260 (GLSYAVVSIV…IAPGGLAADR (216 aa)) enclose the GB1/RHD3-type G domain. 55–62 (GPQGSGKS) contacts GTP. Residues 226 to 246 (LSSYEEKENLFKEQVGQLRQR) are a coiled coil. The chain crosses the membrane as a helical span at residues 689 to 709 (PPAWTVLLLAILGYNEFIFLL). At 710-712 (RNP) the chain is on the lumenal side. A helical membrane pass occupies residues 713–733 (LYLLGLFVAFVVSYAAWLQYD). Topologically, residues 734-823 (ITAYFRHGTL…SVGSNSDDES (90 aa)) are cytoplasmic. The disordered stretch occupies residues 770–823 (NQKSSSHPPRHRPPLHPQSFRNQAQQQSQAQVQYQAPSSLSSSSSVGSNSDDES). Positions 786 to 823 (PQSFRNQAQQQSQAQVQYQAPSSLSSSSSVGSNSDDES) are enriched in low complexity.

Belongs to the TRAFAC class dynamin-like GTPase superfamily. GB1/RHD3 GTPase family. RHD3 subfamily.

Its subcellular location is the endoplasmic reticulum membrane. Its function is as follows. Probable GTP-binding protein that may be involved in cell development. In Oryza sativa subsp. japonica (Rice), this protein is Protein ROOT HAIR DEFECTIVE 3 homolog 2.